A 359-amino-acid chain; its full sequence is Tropomodulin-1 (359 aa).

Residues 36 to 61 (ELDPDNALLPAGLRQKDQTTKAPTGP) are disordered. Positions 39-138 (PDNALLPAGL…CDIAAILGMH (100 aa)) are tropomyosin-binding.

Belongs to the tropomodulin family. In terms of assembly, binds to the N-terminus of tropomyosin and to actin. Interacts with FLII. Highly expressed in the erythrocyte, heart and skeletal muscle.

It localises to the cytoplasm. The protein resides in the cytoskeleton. In terms of biological role, blocks the elongation and depolymerization of the actin filaments at the pointed end. The Tmod/TM complex contributes to the formation of the short actin protofilament, which in turn defines the geometry of the membrane skeleton. This Mus musculus (Mouse) protein is Tropomodulin-1 (Tmod1).